We begin with the raw amino-acid sequence, 225 residues long: Leucyl/phenylalanyl-tRNA--protein transferase (225 aa).

Belongs to the L/F-transferase family.

The protein resides in the cytoplasm. The enzyme catalyses N-terminal L-lysyl-[protein] + L-leucyl-tRNA(Leu) = N-terminal L-leucyl-L-lysyl-[protein] + tRNA(Leu) + H(+). The catalysed reaction is N-terminal L-arginyl-[protein] + L-leucyl-tRNA(Leu) = N-terminal L-leucyl-L-arginyl-[protein] + tRNA(Leu) + H(+). It catalyses the reaction L-phenylalanyl-tRNA(Phe) + an N-terminal L-alpha-aminoacyl-[protein] = an N-terminal L-phenylalanyl-L-alpha-aminoacyl-[protein] + tRNA(Phe). In terms of biological role, functions in the N-end rule pathway of protein degradation where it conjugates Leu, Phe and, less efficiently, Met from aminoacyl-tRNAs to the N-termini of proteins containing an N-terminal arginine or lysine. In Rhodopseudomonas palustris (strain TIE-1), this protein is Leucyl/phenylalanyl-tRNA--protein transferase.